The sequence spans 301 residues: 4-diphosphocytidyl-2-C-methyl-D-erythritol kinase (301 aa).

The active site involves Lys10. An ATP-binding site is contributed by 96-106; that stretch reads PMGGGVGGGSS. Residue Asp138 is part of the active site.

This sequence belongs to the GHMP kinase family. IspE subfamily.

The enzyme catalyses 4-CDP-2-C-methyl-D-erythritol + ATP = 4-CDP-2-C-methyl-D-erythritol 2-phosphate + ADP + H(+). Its pathway is isoprenoid biosynthesis; isopentenyl diphosphate biosynthesis via DXP pathway; isopentenyl diphosphate from 1-deoxy-D-xylulose 5-phosphate: step 3/6. In terms of biological role, catalyzes the phosphorylation of the position 2 hydroxy group of 4-diphosphocytidyl-2C-methyl-D-erythritol. This Alcanivorax borkumensis (strain ATCC 700651 / DSM 11573 / NCIMB 13689 / SK2) protein is 4-diphosphocytidyl-2-C-methyl-D-erythritol kinase.